The following is a 151-amino-acid chain: uncharacterized protein (151 aa).

The next 4 membrane-spanning stretches (helical) occupy residues 8–28 (GIGSGVSLLILRFFLAWEFFE), 60–80 (WHVAMGSELIFPFLLIFGVLT), 82–102 (FSALSLTILISVAWYSIHADS), and 113–133 (LPLIYVVTLLILITQGAGKLS).

It belongs to the DoxX family.

It is found in the cell membrane. This is an uncharacterized protein from Haemophilus influenzae (strain ATCC 51907 / DSM 11121 / KW20 / Rd).